The primary structure comprises 129 residues: RutC family protein PM1466 (129 aa).

Belongs to the RutC family.

This chain is RutC family protein PM1466, found in Pasteurella multocida (strain Pm70).